Reading from the N-terminus, the 72-residue chain is Thiostrepton (72 aa).

A propeptide spanning residues 1 to 55 (MDATAIHERWSVMSNASIGQEIGVEGLTGLDVDALEISDYVDETLLDGEDLTVTM) is cleaved from the precursor. The 4-(1-hydroxyethyl)-7-isoleucino-2-(threonin-O3-ylcarbonyl)-7,8-dihydroquinolin-8-ol (Ile-Thr) cross-link spans 56–67 (IASASCTTCICT). The residue at position 58 (serine 58) is a 2,3-didehydroalanine (Ser). A cross-link (thiazole-4-carboxylic acid (Ser-Cys)) is located at residues 60–61 (SC). The 5-amino-piperideine-2,5-dicarboxylic acid (Ser-Cys) (with S-69) cross-link spans 60–68 (SCTTCICTC). Positions 60 to 69 (SCTTCICTCS) form a cross-link, 5-amino-piperideine-2,5-dicarboxylic acid (Ser-Ser) (with C-68). Threonine 63 carries the post-translational modification (Z)-2,3-didehydrobutyrine. The segment at residues 63 to 64 (TC) is a cross-link ((4S)-thiazoline-4-carboxylic acid (Thr-Cys)). (3S,4R)-3,4-dihydroxyisoleucine is present on isoleucine 65. The thiazole-4-carboxylic acid (Ile-Cys) cross-link spans 65 to 66 (IC). The thiazole-4-carboxylic acid (Thr-Cys) cross-link spans 67 to 68 (TC). Residues 69–70 (SC) constitute a cross-link (thiazole-4-carboxylic acid (Ser-Cys)). 2,3-didehydroalanine (Ser) occurs at positions 71 and 72. At serine 72 the chain carries Serine amide.

It belongs to the thiocillin family. Maturation of thiazole and oxazole containing antibiotics involves the enzymatic condensation of a Cys, Ser or Thr with the alpha-carbonyl of the preceding amino acid to form a thioether or ether bond, then dehydration to form a double bond with the alpha-amino nitrogen. Thiazoline or oxazoline ring are dehydrogenated to form thiazole or oxazole rings. Post-translationally, maturation of pyridinyl containing antibiotics involves the cross-linking of a Ser and a Cys-Ser pair usually separated by 7 or 8 residues along the peptide chain. The Ser residues are dehydrated to didehydroalanines, then bonded between their beta carbons. The alpha carbonyl of the Cys condenses with alpha carbon of the first Ser to form a pyridinyl ring. The ring may be multiply dehydrogenated to form a pyridine ring with loss of the amino nitrogen of the first Ser. In terms of processing, the amidation of Ser-72 probably does not occur by the same mechanism, oxidative cleavage of glycine, as in eukaryotes. The structure of the 2,3-didehydrobutyrin is shown to be Z-isomer.

It is found in the secreted. Functionally, has bacteriocidal activity. Inhibits bacterial protein biosynthesis by acting on the elongation factor Tu (EF-Tu). This is Thiostrepton (tpdA) from Streptomyces azureus.